The sequence spans 103 residues: Large ribosomal subunit protein bL21 (103 aa).

This sequence belongs to the bacterial ribosomal protein bL21 family. Part of the 50S ribosomal subunit. Contacts protein L20.

Its function is as follows. This protein binds to 23S rRNA in the presence of protein L20. This is Large ribosomal subunit protein bL21 from Saccharophagus degradans (strain 2-40 / ATCC 43961 / DSM 17024).